Here is a 134-residue protein sequence, read N- to C-terminus: Bet1-like protein At1g29060 (134 aa).

The segment covering 1 to 12 (MASNRGAGGSLY) has biased composition (gly residues). Residues 1–31 (MASNRGAGGSLYGGADPYRSREGLSTRNASG) form a disordered region. The Cytoplasmic portion of the chain corresponds to 1 to 110 (MASNRGAGGS…LSIIRSGNNH (110 aa)). The region spanning 40 to 102 (DPMHSDLDDE…KNNIRKLNLS (63 aa)) is the t-SNARE coiled-coil homology domain. A helical; Anchor for type IV membrane protein transmembrane segment spans residues 111–131 (IMHVVLFALLLFFILYMWSKM). Topologically, residues 132-134 (FKR) are vesicular.

Belongs to the BET1 family.

Its subcellular location is the golgi apparatus membrane. It localises to the endoplasmic reticulum membrane. In terms of biological role, required for vesicular transport from the ER to the Golgi complex. Functions as a SNARE associated with ER-derived vesicles. This chain is Bet1-like protein At1g29060, found in Arabidopsis thaliana (Mouse-ear cress).